We begin with the raw amino-acid sequence, 956 residues long: MASNHPAFSFHQKQVLRQELTQIQSSLNSGGGGGGGGGGGGKSAPGPSGALPTCSACHKMAPRTETPVSSISNSLENALHTSAHSTEESLPKRPLGKHGKVSVEKIDLKGLSHTKNDRSVECSFEVLWSDSSITSVTKSSSEVTEFISKLSQLCPEENLDKLIPCLAGPDSFYVERNHVDLEAGLRFLASAPSHTLKHDHVRKFFSSSSPSQQLQSPSPGNPSLPKVGAVMGVSGRPVCGVAGIPSSQSSAQHHLQHSASTSASLPHCSHTGGTGSALAYRTQVDNSPTILMPSSLQTPQPQEQNGILDWLRKLRLHKYYPVFKQLTMEKFLSLTEEDLNKFESLTMGAKKKLKTQLELEKEKSERRCLNSSAPSLVTSSGVARVTPTSHVGPVQPGRSSSHASELRVEVEPPAHQLPREGSSSEYSSSSSSPMGVQVREESSDSAEESDRRVDIHVEGTEKEKPVMLLAHFPSSSARPTAQVLPVQNETGSSPAAHHPLPPQLMPAASHLAPVRMLNSVHKSDRGGADVKLLSSSVHSLLSLEERNKGPGPRSGTKVDKSFGGAVLDPLPSAAPHPPGQGLSGLVENNAVSPTVSFGPRAKVVHAATLDRVLKTAQQPALTVESSSATTGTPSTVLHVARPPIKLLLASSVPADAAIAGQTSCPNNGQISVPPAIMNPRTALYTANTKVAFSAVSSVPVGPLQGSFCANSNTASPSSHPSTSFASMASLPSCPAPSSSPALSSVPESSFYSGGAGSSSPGNIPASSQSHHHHHHHQQPPAPPQPAPPPPGCIVCTSCGCSGSCGSNGLTVSYANYFQHPFSGPSVLTFPFLPFSPMCGNGYVSTQQYGGGSAFPVVHTPYNGSVTPDPVLGGQSTFAVPPMQNFMAGTAGVYQAQGLVGSTNGSSHKKSGNLSCYNCGATGHRAQDCKQPSMDFNRQGTFRLKYAPPAESLDSTD.

8 disordered regions span residues 25-50, 78-99, 206-229, 243-276, 361-464, 485-505, 543-583, and 750-786; these read SSLN…PSGA, ALHT…GKHG, SSSS…KVGA, GIPS…GTGS, KEKS…EKEK, PVQN…PQLM, LEER…QGLS, and FYSG…PQPA. Residues 29–43 are compositionally biased toward gly residues; that stretch reads SGGGGGGGGGGGGKS. Low complexity-rich tracts occupy residues 206-225 and 246-265; these read SSSS…PSLP and SSQS…SASL. The segment covering 369–389 has biased composition (polar residues); sequence LNSSAPSLVTSSGVARVTPTS. The span at 423 to 432 shows a compositional bias: low complexity; the sequence is SSEYSSSSSS. Residues 438–464 show a composition bias toward basic and acidic residues; sequence VREESSDSAEESDRRVDIHVEGTEKEK. Low complexity predominate over residues 750–768; sequence FYSGGAGSSSPGNIPASSQ. A CCHC-type zinc finger spans residues 913–930; the sequence is LSCYNCGATGHRAQDCKQ.

The protein is Zinc finger CCHC domain-containing protein 14 (Zcchc14) of Mus musculus (Mouse).